The sequence spans 332 residues: Clavesin-1 (332 aa).

In terms of domain architecture, CRAL-TRIO spans 96–257 (IKRALMDGFP…EFGGTLPPYD (162 aa)). The disordered stretch occupies residues 300–332 (KYMKRSHSVVEPGTLRHEEERENENTQPLLALD). The segment covering 313–323 (TLRHEEERENE) has biased composition (basic and acidic residues).

The protein localises to the golgi apparatus. The protein resides in the trans-Golgi network membrane. It is found in the early endosome membrane. Its subcellular location is the cytoplasmic vesicle. It localises to the clathrin-coated vesicle. Functionally, required for normal morphology of late endosomes and/or lysosomes in neurons. Binds phosphatidylinositol 3,5-bisphosphate (PtdIns(3,5)P2). This chain is Clavesin-1 (clvs1), found in Xenopus laevis (African clawed frog).